A 265-amino-acid chain; its full sequence is MAINLQTLFKKKREGKKITMVSTYDYWSAKLCDEVGIDCILVGDSLGTVVKGEGDTLSVTLEEIIYHTKCVMRGVKNAFVIADMPFMSYQVSMEKAVENCGRVIKETKAKAVKLEGGEEIAELVYKLTRIGIPVVGHVGFTPQHINVFGKPKVVGKKKEEEEKLRRDFRALEEAGAFMIVLESVPTHLAKELWKGSNSIVIGIGAGKYVDGQVLVFHDIVGLFEDFKPKFVRRYLEGAKLVKEALKNFKIDVEGGNFPSEEESYG.

Aspartate 44 and aspartate 83 together coordinate Mg(2+). 3-methyl-2-oxobutanoate contacts are provided by residues 44 to 45, aspartate 83, and lysine 113; that span reads DS. Glutamate 115 contributes to the Mg(2+) binding site. Catalysis depends on glutamate 182, which acts as the Proton acceptor.

This sequence belongs to the PanB family. In terms of assembly, homodecamer; pentamer of dimers. It depends on Mg(2+) as a cofactor.

The protein localises to the cytoplasm. It carries out the reaction 3-methyl-2-oxobutanoate + (6R)-5,10-methylene-5,6,7,8-tetrahydrofolate + H2O = 2-dehydropantoate + (6S)-5,6,7,8-tetrahydrofolate. The protein operates within cofactor biosynthesis; (R)-pantothenate biosynthesis; (R)-pantoate from 3-methyl-2-oxobutanoate: step 1/2. Functionally, catalyzes the reversible reaction in which hydroxymethyl group from 5,10-methylenetetrahydrofolate is transferred onto alpha-ketoisovalerate to form ketopantoate. This chain is 3-methyl-2-oxobutanoate hydroxymethyltransferase, found in Aquifex aeolicus (strain VF5).